The chain runs to 695 residues: Lactotransferrin (695 aa).

The N-terminal stretch at 1–6 is a signal peptide; sequence LGLCLA. Transferrin-like domains lie at 12–339 and 351–680; these read VRWC…NLRE and VVWC…NLRR. 2 disulfides stabilise this stretch: Cys15-Cys51 and Cys25-Cys42. Position 66 (Asp66) interacts with Fe(3+). The active site involves Lys79. Tyr98 contacts Fe(3+). 5 cysteine pairs are disulfide-bonded: Cys121–Cys204, Cys163–Cys179, Cys166–Cys189, Cys176–Cys187, and Cys237–Cys251. The hydrogencarbonate site is built by Thr123, Arg127, Ala129, and Gly130. The N-linked (GlcNAc...) asparagine glycan is linked to Asn143. Tyr198 contacts Fe(3+). His259 provides a ligand contact to Fe(3+). The Nucleophile role is filled by Ser265. The N-linked (GlcNAc...) asparagine glycan is linked to Asn287. 2 disulfides stabilise this stretch: Cys354-Cys386 and Cys364-Cys377. Asp401 lines the Fe(3+) pocket. Intrachain disulfides connect Cys411–Cys690, Cys431–Cys653, Cys463–Cys538, Cys487–Cys681, Cys497–Cys511, Cys508–Cys521, Cys579–Cys593, and Cys631–Cys636. Pro436 contributes to the D-glucose binding site. Tyr439 contributes to the Fe(3+) binding site. Thr465, Arg469, Ala471, and Ala472 together coordinate hydrogencarbonate. N-linked (GlcNAc...) asparagine glycosylation occurs at Asn482. Residue Tyr532 participates in Fe(3+) binding. Asn600 lines the D-glucose pocket. A Fe(3+)-binding site is contributed by His601. Tyr666 is a binding site for D-glucose.

The protein belongs to the transferrin family. As to quaternary structure, monomer. Found in a complex with LTF, CLU, EPPIN and SEMG1. Found in a complex with MPO and LTF; interacts directly with CP, allows Fe(3+) incorporation into LTF and activation of CP ferroxidase activity. In terms of processing, poly-N-acetyllactosaminic carbohydrate moiety seems to be needed for TLR4 activation.

It is found in the secreted. The protein resides in the cytoplasmic granule. Functionally, transferrins are iron binding transport proteins which can bind two Fe(3+) ions in association with the binding of an anion, usually bicarbonate. Its function is as follows. Major iron-binding and multifunctional protein found in exocrine fluids such as breast milk and mucosal secretions. Has antimicrobial activity, which depends on the extracellular cation concentration. Antimicrobial properties include bacteriostasis, which is related to its ability to sequester free iron and thus inhibit microbial growth, as well as direct bactericidal properties leading to the release of lipopolysaccharides from the bacterial outer membrane. Can also prevent bacterial biofilm development in P.aeruginosa infection. Has weak antifungal activity against C.albicans. Has anabolic, differentiating and anti-apoptotic effects on osteoblasts and can also inhibit osteoclastogenesis, possibly playing a role in the regulation of bone growth. Promotes binding of species C adenoviruses to epithelial cells, promoting adenovirus infection. Can inhibit papillomavirus infections. Stimulates the TLR4 signaling pathway leading to NF-kappa-B activation and subsequent pro-inflammatory cytokine production while also interfering with the lipopolysaccharide (LPS)-stimulated TLR4 signaling. Inhibits neutrophil granulocyte migration to sites of apoptosis, when secreted by apoptotic cells. Stimulates VEGFA-mediated endothelial cell migration and proliferation. Binds heparin, chondroitin sulfate and possibly other glycosaminoglycans (GAGs). Also binds specifically to pneumococcal surface protein A (PspA), the lipid A portion of bacterial lipopolysaccharide (LPS), lysozyme and DNA. In terms of biological role, lactoferricin binds to the bacterial surface and is crucial for the bactericidal functions. Has some antiviral activity against papillomavirus infection. N-terminal region shows strong antifungal activity against C.albicans. Contains two BBXB heparin-binding consensus sequences that appear to form the predominate functional GAG-binding site. The lactotransferrin transferrin-like domain 1 functions as a serine protease of the peptidase S60 family that cuts arginine rich regions. This function contributes to the antimicrobial activity. Shows a preferential cleavage at -Arg-Ser-Arg-Arg-|- and -Arg-Arg-Ser-Arg-|-, and of Z-Phe-Arg-|-aminomethylcoumarin sites. This chain is Lactotransferrin (LTF), found in Equus caballus (Horse).